Consider the following 221-residue polypeptide: Putative efflux system component YhbJ (221 aa).

A helical membrane pass occupies residues 17–37 (LILTNIIGLIVVLAIIAGGAY).

Belongs to the membrane fusion protein (MFP) (TC 8.A.1) family.

The protein resides in the cell membrane. This chain is Putative efflux system component YhbJ (yhbJ), found in Bacillus subtilis (strain 168).